We begin with the raw amino-acid sequence, 61 residues long: Large ribosomal subunit protein uL30 (61 aa).

It belongs to the universal ribosomal protein uL30 family. As to quaternary structure, part of the 50S ribosomal subunit.

The chain is Large ribosomal subunit protein uL30 from Chlorobaculum tepidum (strain ATCC 49652 / DSM 12025 / NBRC 103806 / TLS) (Chlorobium tepidum).